The chain runs to 333 residues: Abequosyltransferase RfbV (333 aa).

It belongs to the glycosyltransferase 2 family.

The enzyme catalyses CDP-alpha-D-abequose + alpha-D-Man-(1-&gt;4)-alpha-L-Rha-(1-&gt;3)-alpha-D-Gal-di-trans,octa-cis-undecaprenyl diphosphate = alpha-D-Abe-(1-&gt;3)-alpha-D-Man-(1-&gt;4)-alpha-L-Rha-(1-&gt;3)-alpha-D-Gal-di-trans,octa-cis-undecaprenyl diphosphate + CDP + H(+). It participates in bacterial outer membrane biogenesis; LPS O-antigen biosynthesis. Its function is as follows. Catalyzes the transfer of CDP-abequose on D-mannosyl-L-rhamnosyl-D-galactose-1-diphospholipid to yield D-abequosyl-D-mannosyl-rhamnosyl-D-galactose-1-diphospholipid. In Salmonella typhimurium (strain LT2 / SGSC1412 / ATCC 700720), this protein is Abequosyltransferase RfbV (rfbV).